Consider the following 229-residue polypeptide: Translation initiation factor 6 (229 aa).

This sequence belongs to the eIF-6 family.

Binds to the 50S ribosomal subunit and prevents its association with the 30S ribosomal subunit to form the 70S initiation complex. The protein is Translation initiation factor 6 of Thermococcus kodakarensis (strain ATCC BAA-918 / JCM 12380 / KOD1) (Pyrococcus kodakaraensis (strain KOD1)).